Reading from the N-terminus, the 414-residue chain is TAR DNA-binding protein 43 (414 aa).

Glycyl lysine isopeptide (Lys-Gly) (interchain with G-Cter in SUMO2) cross-links involve residues lysine 79, lysine 84, lysine 95, lysine 102, and lysine 181. The Nuclear localization signal motif lies at lysine 82 to arginine 98. 2 RRM domains span residues serine 104–glutamate 200 and arginine 191–proline 262. A Phosphoserine modification is found at serine 183. The segment at aspartate 216 to methionine 414 is interaction with UBQLN2. The Nuclear export signal signature appears at isoleucine 239–isoleucine 250. Over residues glutamate 261 to glycine 274 the composition is skewed to basic and acidic residues. Disordered regions lie at residues glutamate 261–glutamine 303 and alanine 341–serine 373. Residue lysine 263 forms a Glycyl lysine isopeptide (Lys-Gly) (interchain with G-Cter in SUMO2) linkage. Residues arginine 275–glutamine 303 show a composition bias toward gly residues. Serine 292 is modified (phosphoserine). Arginine 293 bears the Omega-N-methylarginine mark. Residues serine 342–asparagine 358 show a composition bias toward low complexity.

Homodimer. Homooligomer (via its N-terminal domain). Interacts with BRDT. Binds specifically to pyrimidine-rich motifs of TAR DNA and to single stranded TG repeated sequences. Binds to RNA, specifically to UG repeated sequences with a minimum of six contiguous repeats. Interacts with ATXN2; the interaction is RNA-dependent. Interacts with MATR3. Interacts with UBQLN2. Interacts with HNRNPA2B1. Interacts with ZNF106. Interacts with CNOT7/CAF1. Interacts with CRY2. Interacts with PPIA/CYPA; the interaction is dependent on RNA-binding activity of TARDBP and PPIase activity of PPIA/CYPA and acetylation of PPIA/CYPA at 'Lys-125' favors the interaction. In terms of processing, hyperphosphorylated in hippocampus, neocortex, and spinal cord from individuals affected with ALS and FTLDU. Phosphorylated upon cellular stress. Ubiquitinated in hippocampus, neocortex, and spinal cord from individuals affected with ALS and FTLDU. Post-translationally, cleaved to generate C-terminal fragments in hippocampus, neocortex, and spinal cord from individuals affected with ALS and FTLDU. As to expression, ubiquitously expressed. In particular, expression is high in pancreas, placenta, lung, genital tract and spleen.

The protein resides in the nucleus. Its subcellular location is the cytoplasm. The protein localises to the stress granule. It is found in the mitochondrion. RNA-binding protein that is involved in various steps of RNA biogenesis and processing. Preferentially binds, via its two RNA recognition motifs RRM1 and RRM2, to GU-repeats on RNA molecules predominantly localized within long introns and in the 3'UTR of mRNAs. In turn, regulates the splicing of many non-coding and protein-coding RNAs including proteins involved in neuronal survival, as well as mRNAs that encode proteins relevant for neurodegenerative diseases. Plays a role in maintaining mitochondrial homeostasis by regulating the processing of mitochondrial transcripts. Also regulates mRNA stability by recruiting CNOT7/CAF1 deadenylase on mRNA 3'UTR leading to poly(A) tail deadenylation and thus shortening. In response to oxidative insult, associates with stalled ribosomes localized to stress granules (SGs) and contributes to cell survival. Also participates in the normal skeletal muscle formation and regeneration, forming cytoplasmic myo-granules and binding mRNAs that encode sarcomeric proteins. Plays a role in the maintenance of the circadian clock periodicity via stabilization of the CRY1 and CRY2 proteins in a FBXL3-dependent manner. Negatively regulates the expression of CDK6. Regulates the expression of HDAC6, ATG7 and VCP in a PPIA/CYPA-dependent manner. This is TAR DNA-binding protein 43 from Homo sapiens (Human).